Here is a 406-residue protein sequence, read N- to C-terminus: Putative phosphate permease TK2061 (406 aa).

10 consecutive transmembrane segments (helical) span residues 2–22 (AVMD…AWAI), 45–65 (AVLI…KSVT), 82–102 (TVLI…LVIA), 115–135 (IIGG…VNWG), 139–159 (QVVL…FLVF), 182–202 (FWIG…VLHG), 208–228 (GVLF…FLTL), 288–308 (VPVP…GVAT), 324–346 (LTNT…ASWL), and 385–405 (FVTV…LMIV).

Belongs to the inorganic phosphate transporter (PiT) (TC 2.A.20) family.

It localises to the cell membrane. Potential transporter for phosphate. The polypeptide is Putative phosphate permease TK2061 (Thermococcus kodakarensis (strain ATCC BAA-918 / JCM 12380 / KOD1) (Pyrococcus kodakaraensis (strain KOD1))).